A 352-amino-acid polypeptide reads, in one-letter code: MKKIVFTGGGTVGHVTLNLLLMPKFIEDGWEVHYIGDKRGIEHQEILKSGLDVTFHSIATGKLRRYFSWQNMLDVFKVGWGIVQSLFIMLRLRPQTLFSKGGFVSVPPVIAARVSGVPVFIHESDLSMGLANKIAYKFATKMYSTFEQASSLAKVEHVGAVTKVSDKNTPEPDELVDIQTHFNPKLPTVLFVGGSAGARVFNQLVTDHKKELTERYNIINLTGDSSLNELRQNLFRVDYVTDLYQPLMELADIVVTRGGANTIFELLAIAKLHVIVPLGREASRGDQIENAAYFVKKGYAEDLQESDLTLDSLEEKLSHLLSHKEDYQAKMKASKELKSLADFYQLLKKDLS.

Ser195 and Gln287 together coordinate UDP-N-acetyl-alpha-D-glucosamine.

This sequence belongs to the glycosyltransferase 28 family. MurG subfamily.

The protein resides in the cell membrane. It catalyses the reaction Mur2Ac(oyl-L-Ala-gamma-D-Glu-L-Lys-D-Ala-D-Ala)-di-trans,octa-cis-undecaprenyl diphosphate + UDP-N-acetyl-alpha-D-glucosamine = beta-D-GlcNAc-(1-&gt;4)-Mur2Ac(oyl-L-Ala-gamma-D-Glu-L-Lys-D-Ala-D-Ala)-di-trans,octa-cis-undecaprenyl diphosphate + UDP + H(+). The protein operates within cell wall biogenesis; peptidoglycan biosynthesis. Cell wall formation. Catalyzes the transfer of a GlcNAc subunit on undecaprenyl-pyrophosphoryl-MurNAc-pentapeptide (lipid intermediate I) to form undecaprenyl-pyrophosphoryl-MurNAc-(pentapeptide)GlcNAc (lipid intermediate II). This is UDP-N-acetylglucosamine--N-acetylmuramyl-(pentapeptide) pyrophosphoryl-undecaprenol N-acetylglucosamine transferase from Streptococcus pneumoniae (strain Hungary19A-6).